The sequence spans 723 residues: Homeobox protein vnd (723 aa).

4 disordered regions span residues 1–115 (MTTS…GLAP), 224–307 (AHHG…HHHP), 465–549 (GSSG…RKRR), and 703–723 (HAHA…AWWP). The segment covering 10 to 22 (TPSKRDRDRERDN) has biased composition (basic and acidic residues). The segment covering 23-36 (SSGLGSAGSLPASP) has biased composition (low complexity). The segment covering 37 to 48 (QSAITVSPSSPA) has biased composition (polar residues). The span at 61 to 92 (LERKREREDREDREDRKERQERHERDRDHERF) shows a compositional bias: basic and acidic residues. Residues 97-111 (STASTTVPTNTSSSS) show a composition bias toward low complexity. A compositionally biased stretch (basic and acidic residues) spans 226–235 (HGSDLSHHSA). The span at 237-255 (ESTSGHRGQGSHTSPSALS) shows a compositional bias: polar residues. Basic and acidic residues predominate over residues 278–289 (EADHHSTTEHHA). Basic residues predominate over residues 298–307 (HPHHQQHHHP). Low complexity predominate over residues 483-493 (NNNNNTTNNNN). Residues 512-528 (LNEDGIEEDIDDVDDAD) are compositionally biased toward acidic residues. Positions 545 to 604 (KRKRRVLFTKAQTYELERRFRQQRYLSAPEREHLASLIRLTPTQVKIWFQNHRYKTKRAQ) form a DNA-binding region, homeobox. The segment covering 703-716 (HAHAHGHGHPHAHA) has biased composition (basic residues).

The protein belongs to the NK-2 homeobox family. In terms of tissue distribution, expressed in the CNS and midgut.

Its subcellular location is the nucleus. Probable transcriptional regulator involved in the regulation of the proneural AS-C genes and the neurogenic genes of the enhancer of split complex. Could specifically activate proneural genes in the ventral-most neuroectoderm. The chain is Homeobox protein vnd (vnd) from Drosophila melanogaster (Fruit fly).